A 206-amino-acid chain; its full sequence is Protein GrpE (206 aa).

Residues 1-64 (MSKKASMHKE…KALEEAQQQA (64 aa)) form a disordered region. Positions 46–58 (SDAKVQELEKALE) are enriched in basic and acidic residues.

The protein belongs to the GrpE family. As to quaternary structure, homodimer.

It localises to the cytoplasm. Its function is as follows. Participates actively in the response to hyperosmotic and heat shock by preventing the aggregation of stress-denatured proteins, in association with DnaK and GrpE. It is the nucleotide exchange factor for DnaK and may function as a thermosensor. Unfolded proteins bind initially to DnaJ; upon interaction with the DnaJ-bound protein, DnaK hydrolyzes its bound ATP, resulting in the formation of a stable complex. GrpE releases ADP from DnaK; ATP binding to DnaK triggers the release of the substrate protein, thus completing the reaction cycle. Several rounds of ATP-dependent interactions between DnaJ, DnaK and GrpE are required for fully efficient folding. In Prosthecochloris aestuarii (strain DSM 271 / SK 413), this protein is Protein GrpE.